We begin with the raw amino-acid sequence, 164 residues long: NADH-quinone oxidoreductase subunit I (164 aa).

4Fe-4S ferredoxin-type domains are found at residues 55–85 (LRRYPNGEERCIACKLCEAICPAQAITIDAE) and 95–124 (TRYDIDMTKCIYCGFCQEACPVDAIVEGPN). Positions 65, 68, 71, 75, 104, 107, 110, and 114 each coordinate [4Fe-4S] cluster.

It belongs to the complex I 23 kDa subunit family. NDH-1 is composed of 14 different subunits. Subunits NuoA, H, J, K, L, M, N constitute the membrane sector of the complex. Requires [4Fe-4S] cluster as cofactor.

The protein localises to the cell inner membrane. The enzyme catalyses a quinone + NADH + 5 H(+)(in) = a quinol + NAD(+) + 4 H(+)(out). Its function is as follows. NDH-1 shuttles electrons from NADH, via FMN and iron-sulfur (Fe-S) centers, to quinones in the respiratory chain. The immediate electron acceptor for the enzyme in this species is believed to be ubiquinone. Couples the redox reaction to proton translocation (for every two electrons transferred, four hydrogen ions are translocated across the cytoplasmic membrane), and thus conserves the redox energy in a proton gradient. The sequence is that of NADH-quinone oxidoreductase subunit I from Dinoroseobacter shibae (strain DSM 16493 / NCIMB 14021 / DFL 12).